The following is a 642-amino-acid chain: Sterol O-acyltransferase 2 (642 aa).

Residues lysine 174–valine 194 form a disordered region. Phosphoserine occurs at positions 175 and 176. 5 helical membrane passes run phenylalanine 215–isoleucine 235, threonine 292–threonine 312, isoleucine 404–tyrosine 424, isoleucine 442–methionine 462, and leucine 485–tryptophan 505. Residues phenylalanine 523–asparagine 529 carry the FYXDWWN motif motif. 2 helical membrane-spanning segments follow: residues alanine 567–phenylalanine 587 and valine 622–phenylalanine 642. Residue histidine 579 is part of the active site.

Belongs to the membrane-bound acyltransferase family. Sterol o-acyltransferase subfamily.

The protein resides in the endoplasmic reticulum membrane. The enzyme catalyses ergosterol + an acyl-CoA = ergosteryl ester + CoA. It catalyses the reaction zymosterol + an acyl-CoA = zymosterol ester + CoA. Its function is as follows. Sterol O-acyltransferase that catalyzes the formation of stery esters. The chain is Sterol O-acyltransferase 2 from Saccharomyces cerevisiae (strain ATCC 204508 / S288c) (Baker's yeast).